The primary structure comprises 676 residues: Electrogenic aspartate/glutamate antiporter SLC25A13, mitochondrial (676 aa).

At Ala2 the chain carries N-acetylalanine. The regulatory N-terminal domain stretch occupies residues 2-295; sequence AAAKVALTKR…TLADIERIAP (294 aa). At 2–332 the chain is on the mitochondrial intermembrane side; the sequence is AAAKVALTKR…LLQLAESAYR (331 aa). Lys18 is modified (N6-acetyllysine). 4 consecutive EF-hand domains span residues 51-86, 87-122, 123-157, and 158-193; these read SQPN…SVLC, APDA…TTIH, QHIP…FLLE, and IQLE…IRPH. Asp66, Thr68, Asp70, Leu72, and Glu77 together coordinate Ca(2+). A linker loop domain region spans residues 296-311; sequence LEEGMLPFNLAEAQRQ. Positions 322–613 are carrier domain; the sequence is FLLQLAESAY…LQRWFYVDFG (292 aa). Solcar repeat units follow at residues 327–419, 427–511, and 519–607; these read AESA…VRDK, VPLL…VKAS, and VSPG…LQRW. A helical membrane pass occupies residues 333-350; that stretch reads FGLGSIAGAVGATAVYPI. The Mitochondrial matrix segment spans residues 351–393; that stretch reads DLVKTRMQNQRSTGSFVGELMYKNSFDCFKKVLRYEGFFGLYR. 2 positions are modified to N6-acetyllysine: Lys354 and Lys373. Residues 394–413 traverse the membrane as a helical segment; the sequence is GLLPQLLGVAPEKAIKLTVN. At 414 to 436 the chain is on the mitochondrial intermembrane side; the sequence is DFVRDKFMHKDGSVPLLAEIFAG. The helical transmembrane segment at 437–450 threads the bilayer; that stretch reads GCAGGSQVIFTNPL. At 451 to 485 the chain is on the mitochondrial matrix side; it reads EIVKIRLQVAGEITTGPRVSALSVVRDLGFFGIYK. The residue at position 454 (Lys454) is an N6-methyllysine. Position 485 is an N6-acetyllysine; alternate (Lys485). Lys485 bears the N6-succinyllysine; alternate mark. Residues 486-505 form a helical membrane-spanning segment; sequence GAKACFLRDIPFSAIYFPCY. At 506 to 524 the chain is on the mitochondrial intermembrane side; that stretch reads AHVKASFANEDGQVSPGSL. Residues 525–542 traverse the membrane as a helical segment; the sequence is LLAGAIAGMPAASLVTPA. Over 543 to 581 the chain is Mitochondrial matrix; sequence DVIKTRLQVAARAGQTTYNGVTDCFRKILREEGPKALWK. At Lys581 the chain carries N6-succinyllysine. Residues 582–601 form a helical membrane-spanning segment; the sequence is GVAARVFRSSPQFGVTLLTY. Residues 602–676 are Mitochondrial intermembrane-facing; the sequence is ELLQRWFYVD…STSKVTAGDS (75 aa). Positions 614–676 are C-terminal domain; it reads GVKPVGSEPV…STSKVTAGDS (63 aa). An N6-acetyllysine modification is found at Lys663. Ser667 carries the post-translational modification Phosphoserine.

It belongs to the mitochondrial carrier (TC 2.A.29) family. In terms of assembly, homodimer (via N-terminus). As to expression, at 10.5 dpc, expressed in branchial arches, a well as in the limb and tail buds. At 13.5 dpc expression is predominant in epithelial structures and the forebrain, kidney and liver. Expression in liver is maintained into adulthood.

It is found in the mitochondrion inner membrane. The enzyme catalyses L-aspartate(in) + L-glutamate(out) + H(+)(out) = L-aspartate(out) + L-glutamate(in) + H(+)(in). It carries out the reaction 3-sulfino-L-alanine(out) + L-glutamate(in) + H(+)(in) = 3-sulfino-L-alanine(in) + L-glutamate(out) + H(+)(out). It catalyses the reaction 3-sulfino-L-alanine(out) + L-aspartate(in) = 3-sulfino-L-alanine(in) + L-aspartate(out). Mitochondrial electrogenic aspartate/glutamate antiporter that favors efflux of aspartate and entry of glutamate and proton within the mitochondria as part of the malate-aspartate shuttle. Also mediates the uptake of L-cysteinesulfinate (3-sulfino-L-alanine) by mitochondria in exchange of L-glutamate and proton. Can also exchange L-cysteinesulfinate with aspartate in their anionic form without any proton translocation. Lacks transport activity towards gamma-aminobutyric acid (GABA). The polypeptide is Electrogenic aspartate/glutamate antiporter SLC25A13, mitochondrial (Mus musculus (Mouse)).